A 424-amino-acid polypeptide reads, in one-letter code: MEKFRVHGPFTLSGTVDISGAKNAALPILFAAILAEEPVILTNVPNLKDVETTVKILRKLGVVVERAENNAVHIDASKIDHYVAPYELVKTMRASIWALAPLVARFHQGQVSLPGGCTIGARPVDMHIAGLEKMGATITLDEGYVKAEVNGRLTGARILMDKVSVGATLSVMMAATLAKGTTTIENAAREPEIVDTAIFLNKMGAKITGAGTDTITIEGVERLGGCEHHIVPDRIETGTFLVAAAISGGRITCRGTKADTLDAVIEKLREAGMQVDVTENSITLDSLGMRPKAVNIRTMPHPGFPTDMQAQFTLLNVVANGTSKITETIFENRFMHIPELIRMGAKAEIEGNTAICHGVENLSGAEVMATDLRASISLVLAGCIANGQTIVDRIYHIDRGYEHIEDKLQKLGARIERFNAPFEE.

22-23 is a binding site for phosphoenolpyruvate; the sequence is KN. A UDP-N-acetyl-alpha-D-glucosamine-binding site is contributed by Arg93. Cys117 serves as the catalytic Proton donor. At Cys117 the chain carries 2-(S-cysteinyl)pyruvic acid O-phosphothioketal. Residues 162–165, Asp307, and Ile329 contribute to the UDP-N-acetyl-alpha-D-glucosamine site; that span reads KVSV.

This sequence belongs to the EPSP synthase family. MurA subfamily.

The protein resides in the cytoplasm. It catalyses the reaction phosphoenolpyruvate + UDP-N-acetyl-alpha-D-glucosamine = UDP-N-acetyl-3-O-(1-carboxyvinyl)-alpha-D-glucosamine + phosphate. It participates in cell wall biogenesis; peptidoglycan biosynthesis. Its function is as follows. Cell wall formation. Adds enolpyruvyl to UDP-N-acetylglucosamine. This chain is UDP-N-acetylglucosamine 1-carboxyvinyltransferase, found in Glaesserella parasuis serovar 5 (strain SH0165) (Haemophilus parasuis).